The sequence spans 254 residues: tRNA (guanine-N(7)-)-methyltransferase (254 aa).

The tract at residues 1–34 is disordered; it reads MNTNTPAHPPEGAPLSEATQAALASAEHAPDSPG. Residues Glu-87, Glu-112, Asp-139, and Asp-162 each coordinate S-adenosyl-L-methionine. Asp-162 is a catalytic residue. Residues Lys-166, Asp-198, and 233–236 each bind substrate; that span reads TKFE.

Belongs to the class I-like SAM-binding methyltransferase superfamily. TrmB family.

It carries out the reaction guanosine(46) in tRNA + S-adenosyl-L-methionine = N(7)-methylguanosine(46) in tRNA + S-adenosyl-L-homocysteine. The protein operates within tRNA modification; N(7)-methylguanine-tRNA biosynthesis. Catalyzes the formation of N(7)-methylguanine at position 46 (m7G46) in tRNA. The polypeptide is tRNA (guanine-N(7)-)-methyltransferase (Bordetella pertussis (strain Tohama I / ATCC BAA-589 / NCTC 13251)).